Here is a 697-residue protein sequence, read N- to C-terminus: Testis-specific gene 10 protein (697 aa).

Positions 556–688 (QMTNERISMQ…SPDRGLDRSL (133 aa)) are interaction with HIF1A. The disordered stretch occupies residues 656–684 (NAYNLGPMKPNTKCHSPERAHHRSPDRGL). Residues 670-684 (HSPERAHHRSPDRGL) are compositionally biased toward basic and acidic residues. Ser687 bears the Phosphoserine mark.

It belongs to the CEP135/TSGA10 family. As to quaternary structure, interacts with HIF1A. In terms of processing, processed into N-terminal 27-kDa and C-terminal 55-kDa fragments. As to expression, predominantly expressed in testis, in spermatozoa (at protein level). Not detected in Leydig cells. The N-terminal 27-kDa fragment is also detected in liver, while the C-terminal 55-kDa fragment is also found retina, brain and kidney (at protein level).

Its subcellular location is the cytoplasm. It localises to the cytoskeleton. The protein localises to the microtubule organizing center. The protein resides in the centrosome. It is found in the centriole. Functionally, plays a role in spermatogenesis. When overexpressed, prevents nuclear localization of HIF1A. The polypeptide is Testis-specific gene 10 protein (Tsga10) (Mus musculus (Mouse)).